The chain runs to 376 residues: Phosphate acyltransferase (376 aa).

The segment at 334-376 (AGSLEQAKRDAGGPGSASQMASPIAGPVSGQPAEPYSAQSSKA) is disordered.

Belongs to the PlsX family. In terms of assembly, homodimer. Probably interacts with PlsY.

It localises to the cytoplasm. It carries out the reaction a fatty acyl-[ACP] + phosphate = an acyl phosphate + holo-[ACP]. Its pathway is lipid metabolism; phospholipid metabolism. In terms of biological role, catalyzes the reversible formation of acyl-phosphate (acyl-PO(4)) from acyl-[acyl-carrier-protein] (acyl-ACP). This enzyme utilizes acyl-ACP as fatty acyl donor, but not acyl-CoA. This is Phosphate acyltransferase from Paraburkholderia phymatum (strain DSM 17167 / CIP 108236 / LMG 21445 / STM815) (Burkholderia phymatum).